We begin with the raw amino-acid sequence, 250 residues long: 2,3-bisphosphoglycerate-dependent phosphoglycerate mutase (250 aa).

Substrate is bound by residues Arg8–Asn15, Thr21–Gly22, Arg60, Glu87–Tyr90, Lys98, Arg114–Arg115, and Gly183–Asn184. Residue His9 is the Tele-phosphohistidine intermediate of the active site. The Proton donor/acceptor role is filled by Glu87.

The protein belongs to the phosphoglycerate mutase family. BPG-dependent PGAM subfamily. In terms of assembly, homodimer.

It carries out the reaction (2R)-2-phosphoglycerate = (2R)-3-phosphoglycerate. Its pathway is carbohydrate degradation; glycolysis; pyruvate from D-glyceraldehyde 3-phosphate: step 3/5. Its function is as follows. Catalyzes the interconversion of 2-phosphoglycerate and 3-phosphoglycerate. The protein is 2,3-bisphosphoglycerate-dependent phosphoglycerate mutase of Bordetella petrii (strain ATCC BAA-461 / DSM 12804 / CCUG 43448).